Here is a 75-residue protein sequence, read N- to C-terminus: Protein SlyX homolog (75 aa).

It belongs to the SlyX family.

The polypeptide is Protein SlyX homolog (Vibrio vulnificus (strain CMCP6)).